The chain runs to 79 residues: Cyclotide phyb-A (79 aa).

Residues 1–43 (MVGVNSLRSALYLIVLILFVQLTYFSDARVMDVDLSRAFLPLT) constitute a propeptide that is removed on maturation. Positions 44-73 (GIGCGESCVWIPCVSAAIGCSCSNKICYRN) form a cross-link, cyclopeptide (Gly-Asn). 3 disulfides stabilise this stretch: C47-C63, C51-C65, and C56-C70. Positions 74-79 (GIIPKK) are excised as a propeptide.

Post-translationally, this is a cyclic peptide. In terms of processing, contains 3 disulfide bonds. Expressed in midvein, lamina and periphery of leaves (at protein level).

In terms of biological role, probably participates in a plant defense mechanism. The sequence is that of Cyclotide phyb-A from Petunia hybrida (Petunia).